The sequence spans 326 residues: Protein SEH1 (326 aa).

5 WD repeats span residues 7–46 (TLDSGTTCSSWNQSGDRLAAGSLNGKLSIYESSTSSSSTF), 54–95 (VSES…AHGL), 105–146 (NKSS…ELKN), 224–266 (DKGD…DLEG), and 278–317 (GHQGEVWQMEWDMSGMTLASTGSDGMVKLWQSNLNGEWHE).

This sequence belongs to the WD repeat SEC13 family. In terms of assembly, part of the nuclear pore complex (NPC). The NPC has an eight-fold symmetrical structure comprising a central transport channel and two rings, the cytoplasmic and nuclear rings, to which eight filaments are attached. The cytoplasmic filaments have loose ends, while the nuclear filaments are joined in a distal ring, forming a nuclear basket. NPCs are highly dynamic in configuration and composition, and can be devided in 3 subcomplexes, the NUP62 subcomplex, the NUP107-160 subcomplex and the NUP93 subcomplex, containing approximately 30 different nucleoporin proteins.

Its subcellular location is the nucleus envelope. It localises to the nucleus. The protein resides in the cytoplasm. It is found in the nuclear pore complex. In terms of biological role, required for proper export of mRNAs from the nucleus to the cytoplasm. The protein is Protein SEH1 of Arabidopsis thaliana (Mouse-ear cress).